A 253-amino-acid polypeptide reads, in one-letter code: Phosphate import ATP-binding protein PstB (253 aa).

Residues 5–248 (IETINLHVYY…PEHELTEKYV (244 aa)) form the ABC transporter domain. 37–44 (GPSGCGKS) serves as a coordination point for ATP.

The protein belongs to the ABC transporter superfamily. Phosphate importer (TC 3.A.1.7) family. In terms of assembly, the complex is composed of two ATP-binding proteins (PstB), two transmembrane proteins (PstC and PstA) and a solute-binding protein (PstS).

Its subcellular location is the cell membrane. The catalysed reaction is phosphate(out) + ATP + H2O = ADP + 2 phosphate(in) + H(+). In terms of biological role, part of the ABC transporter complex PstSACB involved in phosphate import. Responsible for energy coupling to the transport system. The polypeptide is Phosphate import ATP-binding protein PstB (Pyrococcus furiosus (strain ATCC 43587 / DSM 3638 / JCM 8422 / Vc1)).